Consider the following 80-residue polypeptide: Sec-independent protein translocase protein TatA (80 aa).

A helical membrane pass occupies residues 1–21; that stretch reads MGQIGIWQILIIALVILVLFG. The segment at 38–80 is disordered; it reads SFKKGLNEEDKPAEPAAKIEGPSHEAKPAGEAAKDPRPADKQG. The segment covering 58–80 has biased composition (basic and acidic residues); it reads GPSHEAKPAGEAAKDPRPADKQG.

The protein belongs to the TatA/E family. The Tat system comprises two distinct complexes: a TatABC complex, containing multiple copies of TatA, TatB and TatC subunits, and a separate TatA complex, containing only TatA subunits. Substrates initially bind to the TatABC complex, which probably triggers association of the separate TatA complex to form the active translocon.

The protein localises to the cell inner membrane. Its function is as follows. Part of the twin-arginine translocation (Tat) system that transports large folded proteins containing a characteristic twin-arginine motif in their signal peptide across membranes. TatA could form the protein-conducting channel of the Tat system. The polypeptide is Sec-independent protein translocase protein TatA (Erythrobacter litoralis (strain HTCC2594)).